A 247-amino-acid polypeptide reads, in one-letter code: V-type proton ATPase subunit D (247 aa).

Belongs to the V-ATPase D subunit family. As to quaternary structure, V-ATPase is a heteromultimeric enzyme made up of two complexes: the ATP-hydrolytic V1 complex and the proton translocation V0 complex. The V1 complex consists of three catalytic AB heterodimers that form a heterohexamer, three peripheral stalks each consisting of EG heterodimers, one central rotor including subunits D and F, and the regulatory subunits C and H. The proton translocation complex V0 consists of the proton transport subunit a, a ring of proteolipid subunits c9c'', rotary subunit d, subunits e and f, and the accessory subunits ATP6AP1/Ac45 and ATP6AP2/PRR. Interacts with SNX10. Expressed in brain (at protein level). Present in tissues active in secretion. Amounts elevated in brain, kidney and testis.

The protein localises to the membrane. Its subcellular location is the cytoplasmic vesicle. The protein resides in the clathrin-coated vesicle membrane. It localises to the cytoplasm. It is found in the cytoskeleton. The protein localises to the microtubule organizing center. Its subcellular location is the centrosome. The protein resides in the cell projection. It localises to the cilium. Functionally, subunit of the V1 complex of vacuolar(H+)-ATPase (V-ATPase), a multisubunit enzyme composed of a peripheral complex (V1) that hydrolyzes ATP and a membrane integral complex (V0) that translocates protons. V-ATPase is responsible for acidifying and maintaining the pH of intracellular compartments and in some cell types, is targeted to the plasma membrane, where it is responsible for acidifying the extracellular environment. May play a role in cilium biogenesis through regulation of the transport and the localization of proteins to the cilium. The polypeptide is V-type proton ATPase subunit D (ATP6V1D) (Bos taurus (Bovine)).